We begin with the raw amino-acid sequence, 361 residues long: Aminomethyltransferase (361 aa).

It belongs to the GcvT family. As to quaternary structure, the glycine cleavage system is composed of four proteins: P, T, L and H.

It carries out the reaction N(6)-[(R)-S(8)-aminomethyldihydrolipoyl]-L-lysyl-[protein] + (6S)-5,6,7,8-tetrahydrofolate = N(6)-[(R)-dihydrolipoyl]-L-lysyl-[protein] + (6R)-5,10-methylene-5,6,7,8-tetrahydrofolate + NH4(+). In terms of biological role, the glycine cleavage system catalyzes the degradation of glycine. This Phocaeicola vulgatus (strain ATCC 8482 / DSM 1447 / JCM 5826 / CCUG 4940 / NBRC 14291 / NCTC 11154) (Bacteroides vulgatus) protein is Aminomethyltransferase.